The chain runs to 1260 residues: Agglutinin-like protein 1 (1260 aa).

The N-terminal stretch at 1–17 (MLQQFTLLFLYLSIASA) is a signal peptide. 4 disulfides stabilise this stretch: C73–C150, C96–C112, C205–C298, and C227–C256. ALS repeat units lie at residues 365 to 396 (TTITTSYVGVTTSYSTKTAPIGETATVIVDVP), 401 to 432 (TTVTSEWTGTITTTTTRTNPTDSIDTVVVQVP), and 438 to 469 (VSTTEYWSQSYATTTTVTAPPGGTDTVIIREP). N471 is a glycosylation site (N-linked (GlcNAc...) asparagine). An ALS 4 repeat occupies 474 to 505 (VTTTEYWSQSFATTTTVTAPPGETDTVIIREP). Residue N507 is glycosylated (N-linked (GlcNAc...) asparagine). An ALS 5 repeat occupies 510-541 (VTTTEYWSQSYATTTTVTAPPGGTDTVLIREP). N-linked (GlcNAc...) asparagine glycosylation is present at N543. The ALS 6 repeat unit spans residues 546-577 (VTTTEYWSQSYATTTTVTAPPGGTDTVIIREP). A glycan (N-linked (GlcNAc...) asparagine) is linked at N579. An ALS 7 repeat occupies 582–613 (VTTTEYWSQSYATTTTITAPPGETDTVIIREP). A glycan (N-linked (GlcNAc...) asparagine) is linked at N615. An ALS 8 repeat occupies 618-649 (VTTTEYWSQSYATTTTVTAPPGGTDTVLIREP). N651 carries an N-linked (GlcNAc...) asparagine glycan. The ALS 9 repeat unit spans residues 654 to 685 (VTTTEYWSQSYATTTTVTAPPGGTDTVLIREP). Residue N687 is glycosylated (N-linked (GlcNAc...) asparagine). One copy of the ALS 10 repeat lies at 690–721 (VTTTEYWSQSYATTTTVTAPPGGTDTVIIREP). Residue N723 is glycosylated (N-linked (GlcNAc...) asparagine). An ALS 11 repeat occupies 726–757 (VTTTEYWSQSYATTTTVTAPPGGTDTVIIREP). N759 carries N-linked (GlcNAc...) asparagine glycosylation. An ALS 12 repeat occupies 762–791 (VTTTEYWSQSFATTTTVTAPPGGTDTVIIY). Residues N820, N886, N918, and N973 are each glycosylated (N-linked (GlcNAc...) asparagine). 2 stretches are compositionally biased toward polar residues: residues 896 to 918 (PTASTMSDSLSSTDGISATSSDN) and 964 to 979 (KVTFTSNGDNQSGTHD). Disordered stretches follow at residues 896–924 (PTASTMSDSLSSTDGISATSSDNVSKSGV) and 954–1226 (SIPS…SSSP). Low complexity predominate over residues 980 to 995 (SQSTSTEIEIVTTSST). Positions 1002-1062 (VSSNTDLTSE…PTVATSTLAS (61 aa)) are enriched in polar residues. 2 N-linked (GlcNAc...) asparagine glycosylation sites follow: N1045 and N1068. Residues 1073 to 1090 (HESASTSLKPSMGENSGL) are compositionally biased toward polar residues. Residues 1091-1110 (TTSTEIEATTTSPTEAPSPA) show a composition bias toward low complexity. Positions 1111–1154 (VSSGTDVTTEPTDTREQPTTLSTTSKTNSESVATTQATNENGGK) are enriched in polar residues. 2 stretches are compositionally biased toward low complexity: residues 1155-1176 (SPSTDLTSSLTTGTSASTSANS) and 1197-1226 (SHSTSVTNSNSIVSNTPQTTLSQQVTSSSP). G1238 carries GPI-anchor amidated glycine lipidation. A propeptide spans 1239 to 1260 (SGSIIQHSTWLYGLITLLSLFI) (removed in mature form).

It belongs to the ALS family. The GPI-anchor is attached to the protein in the endoplasmic reticulum and serves to target the protein to the cell surface. There, the glucosamine-inositol phospholipid moiety is cleaved off and the GPI-modified mannoprotein is covalently attached via its lipidless GPI glycan remnant to the 1,6-beta-glucan of the outer cell wall layer.

It is found in the cell membrane. The protein resides in the secreted. Its subcellular location is the cell wall. In terms of biological role, major cell surface adhesion protein which mediates both yeast-to-host tissue adherence and yeast aggregation. Acts as a downstream effector of the EFG1 regulatory pathway. Required for rapamycin-induced aggregation of C.albicans. Binds glycans and mediates adherence to endothelial and epithelial cells, thereby playing an important role in the pathogenesis of C.albicans infections. This is Agglutinin-like protein 1 (ALS1) from Candida albicans (strain SC5314 / ATCC MYA-2876) (Yeast).